A 665-amino-acid polypeptide reads, in one-letter code: MSTNKSSIEKITLGSFLIALGVVYGDIGTSPLYVMKSIINGNGGLESITPDFILGVLSLIFWTMTLLTTIKYVLITLKADNKGEGGIFSLYTLVRRRAKWLIIPAMVGGSALLADGMLTPAVTVTSSIEGLKILPSFNDIFGNNQDIIIIIVLVILSFLFFIQHFGTEIIGKIFGPVMFIWFAFLAILGIVNLSGNLYLLKALSPHYAIKILFSPNNHLGFFILGGVFLSTTGAEALYSDLGHVGRKNIYLTWPLVKICLLLNYFGQAAWILSQKNNTKLYGIESLNPFFQMMPSWLLLFGVLISTLAAIIASQALISGSYTLVSEAIKLNLFPRLQCLYPSNSKGQIYMPAINRILWIACIAIVLYFRSSDNMEAAYGLSITVTMLMTSILLFNYLLKIKTPLPIALIILVFFGSLEFSFLISSAVKFEKGGFVSVLIALCILSIMYIWIKGHYIKMSLLDYIPIENYKNQLKELKNDVDRPKYATNLVYLTSSEKSKRIERKIMYSILDKRPKRADVYWFVNVIVTDEPYTAEYTVNTFGTDYMVKVQLKLGFRVNQKLNVFLRQIVCELINNGDIKVQNRKYTTLPNRNVGDFRFILINECLSSESKLKSWNSMIIKAKLFIKKFTVSPAKWFGLESSEIEIENVPLILGSTEHTTLKRVYK.

A run of 12 helical transmembrane segments spans residues 15 to 35 (SFLI…LYVM), 48 to 68 (ITPD…TLLT), 100 to 120 (WLII…MLTP), 147 to 167 (IIII…HFGT), 173 to 193 (IFGP…IVNL), 219 to 239 (LGFF…ALYS), 251 to 271 (LTWP…AAWI), 292 to 312 (MMPS…AIIA), 348 to 368 (IYMP…VLYF), 378 to 398 (YGLS…NYLL), 403 to 423 (PLPI…SFLI), and 431 to 451 (KGGF…YIWI).

This sequence belongs to the HAK/KUP transporter (TC 2.A.72) family.

Its subcellular location is the cell membrane. It catalyses the reaction K(+)(in) + H(+)(in) = K(+)(out) + H(+)(out). Functionally, transport of potassium into the cell. Likely operates as a K(+):H(+) symporter. The polypeptide is Probable potassium transport system protein Kup (Clostridium perfringens (strain ATCC 13124 / DSM 756 / JCM 1290 / NCIMB 6125 / NCTC 8237 / Type A)).